A 103-amino-acid polypeptide reads, in one-letter code: Large ribosomal subunit protein uL24 (103 aa).

The protein belongs to the universal ribosomal protein uL24 family. In terms of assembly, part of the 50S ribosomal subunit.

In terms of biological role, one of two assembly initiator proteins, it binds directly to the 5'-end of the 23S rRNA, where it nucleates assembly of the 50S subunit. Its function is as follows. One of the proteins that surrounds the polypeptide exit tunnel on the outside of the subunit. The sequence is that of Large ribosomal subunit protein uL24 from Oceanobacillus iheyensis (strain DSM 14371 / CIP 107618 / JCM 11309 / KCTC 3954 / HTE831).